Consider the following 336-residue polypeptide: Holliday junction branch migration complex subunit RuvB (336 aa).

The tract at residues S4–Y184 is large ATPase domain (RuvB-L). ATP-binding positions include I23, R24, G65, K68, T69, T70, E131–Y133, R174, Y184, and R221. T69 provides a ligand contact to Mg(2+). Positions S185–E255 are small ATPAse domain (RuvB-S). The interval Q258–E336 is head domain (RuvB-H). Residues R313 and R318 each coordinate DNA.

Belongs to the RuvB family. As to quaternary structure, homohexamer. Forms an RuvA(8)-RuvB(12)-Holliday junction (HJ) complex. HJ DNA is sandwiched between 2 RuvA tetramers; dsDNA enters through RuvA and exits via RuvB. An RuvB hexamer assembles on each DNA strand where it exits the tetramer. Each RuvB hexamer is contacted by two RuvA subunits (via domain III) on 2 adjacent RuvB subunits; this complex drives branch migration. In the full resolvosome a probable DNA-RuvA(4)-RuvB(12)-RuvC(2) complex forms which resolves the HJ.

It localises to the cytoplasm. It carries out the reaction ATP + H2O = ADP + phosphate + H(+). In terms of biological role, the RuvA-RuvB-RuvC complex processes Holliday junction (HJ) DNA during genetic recombination and DNA repair, while the RuvA-RuvB complex plays an important role in the rescue of blocked DNA replication forks via replication fork reversal (RFR). RuvA specifically binds to HJ cruciform DNA, conferring on it an open structure. The RuvB hexamer acts as an ATP-dependent pump, pulling dsDNA into and through the RuvAB complex. RuvB forms 2 homohexamers on either side of HJ DNA bound by 1 or 2 RuvA tetramers; 4 subunits per hexamer contact DNA at a time. Coordinated motions by a converter formed by DNA-disengaged RuvB subunits stimulates ATP hydrolysis and nucleotide exchange. Immobilization of the converter enables RuvB to convert the ATP-contained energy into a lever motion, pulling 2 nucleotides of DNA out of the RuvA tetramer per ATP hydrolyzed, thus driving DNA branch migration. The RuvB motors rotate together with the DNA substrate, which together with the progressing nucleotide cycle form the mechanistic basis for DNA recombination by continuous HJ branch migration. Branch migration allows RuvC to scan DNA until it finds its consensus sequence, where it cleaves and resolves cruciform DNA. In Legionella pneumophila (strain Paris), this protein is Holliday junction branch migration complex subunit RuvB.